The following is a 292-amino-acid chain: 2-(5''-triphosphoribosyl)-3'-dephosphocoenzyme-A synthase (292 aa).

Belongs to the CitG/MdcB family.

The catalysed reaction is 3'-dephospho-CoA + ATP = 2'-(5''-triphospho-alpha-D-ribosyl)-3'-dephospho-CoA + adenine. Its function is as follows. Catalyzes the formation of 2-(5''-triphosphoribosyl)-3'-dephosphocoenzyme-A, the precursor of the prosthetic group of the holo-acyl carrier protein (gamma chain) of citrate lyase, from ATP and dephospho-CoA. The polypeptide is 2-(5''-triphosphoribosyl)-3'-dephosphocoenzyme-A synthase (Escherichia coli O139:H28 (strain E24377A / ETEC)).